We begin with the raw amino-acid sequence, 479 residues long: Transcript termination protein A18 (479 aa).

Positions 99–255 constitute a Helicase ATP-binding domain; it reads KNKHKRPTYI…NDIINVSNSL (157 aa). 112–119 contacts ATP; it reads LACGFGKT. Positions 205–208 match the DESH box motif; that stretch reads DESH. The 162-residue stretch at 308–469 folds into the Helicase C-terminal domain; the sequence is ILDTIIYDFN…EKKGKKKELA (162 aa).

It belongs to the helicase family. Poxviruses subfamily. In terms of assembly, interacts with G2. Might be part of a transcription complex composed at least of G2, A18, and H5.

The protein resides in the virion. In terms of biological role, DNA helicase which seems to act as a postreplicative transcription termination factor. Involved in ATP-dependent release of nascent RNA. Forms a stable complex with single-stranded DNA, and to a lesser extent RNA. The sequence is that of Transcript termination protein A18 from Homo sapiens (Human).